The following is a 112-amino-acid chain: Large ribosomal subunit protein P2 (112 aa).

Residues 81–112 are disordered; the sequence is VETAEAKKEDKKEEKKEEEEEEEDDLGFSLFG. Residues 84 to 95 show a composition bias toward basic and acidic residues; sequence AEAKKEDKKEEK. Residues 96 to 106 are compositionally biased toward acidic residues; sequence KEEEEEEEDDL.

Belongs to the eukaryotic ribosomal protein P1/P2 family. As to quaternary structure, P1 and P2 exist as dimers at the large ribosomal subunit. Phosphorylated.

Its function is as follows. Plays an important role in the elongation step of protein synthesis. In Plasmodium falciparum (isolate 3D7), this protein is Large ribosomal subunit protein P2 (MAL3P3.19).